Here is a 469-residue protein sequence, read N- to C-terminus: ATP synthase subunit beta (469 aa).

153-160 (GGAGVGKT) is an ATP binding site.

Belongs to the ATPase alpha/beta chains family. F-type ATPases have 2 components, CF(1) - the catalytic core - and CF(0) - the membrane proton channel. CF(1) has five subunits: alpha(3), beta(3), gamma(1), delta(1), epsilon(1). CF(0) has three main subunits: a(1), b(2) and c(9-12). The alpha and beta chains form an alternating ring which encloses part of the gamma chain. CF(1) is attached to CF(0) by a central stalk formed by the gamma and epsilon chains, while a peripheral stalk is formed by the delta and b chains.

Its subcellular location is the cell membrane. The enzyme catalyses ATP + H2O + 4 H(+)(in) = ADP + phosphate + 5 H(+)(out). Produces ATP from ADP in the presence of a proton gradient across the membrane. The catalytic sites are hosted primarily by the beta subunits. The polypeptide is ATP synthase subunit beta (Pediococcus pentosaceus (strain ATCC 25745 / CCUG 21536 / LMG 10740 / 183-1w)).